Reading from the N-terminus, the 71-residue chain is Long neurotoxin 1 (71 aa).

5 disulfides stabilise this stretch: C3/C21, C14/C42, C27/C31, C46/C57, and C58/C63.

This sequence belongs to the three-finger toxin family. Long-chain subfamily. Type II alpha-neurotoxin sub-subfamily. Expressed by the venom gland.

It localises to the secreted. Its function is as follows. Binds with high affinity to muscular (alpha-1/CHRNA1) and neuronal (alpha-7/CHRNA7) nicotinic acetylcholine receptor (nAChR) and inhibits acetylcholine from binding to the receptor, thereby impairing neuromuscular and neuronal transmission. The chain is Long neurotoxin 1 from Naja melanoleuca (Forest cobra).